The chain runs to 506 residues: MKQILFMDTTLRDGEQSPGVNLNEQEKLQIARQLERLGIHVMEAGFAAASEGDFQSVKRIANTIQNATVMSLARAKESDIRRAYEAVKGAVSPRLHVFLATSDIHMKYKLCMSKEDVLDSIHRSVTLGKSLFPTVQFSAEDATRTARDFLAEAVEVAIRAGANVINIPDTVGYTNPEEYYSLFKYLQESVPSYEKAIFSCHCHDDLGMAVANSLAAVEGGALQVEGTINGIGERAGNAALEEVAVALHIRKDFYQAEPSMTLKEIKATSTLVSRLTGMVVPKNKAIVGANAFAHESGIHQDGVLKEVTTYEIIEPELVGESQNLFVLGKHSGRHAFTEKMKELGYEFTTEERDAVFEAFKKLADRKKEITEEDLRALMLGEAAFAAQQYNITQLQVHFVSNSTQCATVVLKDEEGNVFEDAATGSGSIEAIYNAIQRILGLECELADYRIQSITQGQDALAHVHVELKEGTHQVSGFGVAQDVLEASARAYVHAAGKLKSFIQLVK.

The 263-residue stretch at Ile4 to Lys266 folds into the Pyruvate carboxyltransferase domain. Mn(2+)-binding residues include Asp13, His201, His203, and Asn237. A regulatory domain region spans residues Asn390–Lys506.

Belongs to the alpha-IPM synthase/homocitrate synthase family. LeuA type 1 subfamily. In terms of assembly, homodimer. The cofactor is Mn(2+).

The protein localises to the cytoplasm. The enzyme catalyses 3-methyl-2-oxobutanoate + acetyl-CoA + H2O = (2S)-2-isopropylmalate + CoA + H(+). It functions in the pathway amino-acid biosynthesis; L-leucine biosynthesis; L-leucine from 3-methyl-2-oxobutanoate: step 1/4. Its function is as follows. Catalyzes the condensation of the acetyl group of acetyl-CoA with 3-methyl-2-oxobutanoate (2-ketoisovalerate) to form 3-carboxy-3-hydroxy-4-methylpentanoate (2-isopropylmalate). This chain is 2-isopropylmalate synthase, found in Bacillus cereus (strain ATCC 10987 / NRS 248).